We begin with the raw amino-acid sequence, 493 residues long: Vacuolar-processing enzyme (493 aa).

The signal sequence occupies residues 1–19 (MGSSQLSTLLFFTIVVTFL). An N-linked (GlcNAc...) asparagine glycan is attached at asparagine 147. The active site involves histidine 174. The active-site Nucleophile is cysteine 216. Cysteine 249 and cysteine 263 are oxidised to a cystine. N-linked (GlcNAc...) asparagine glycans are attached at residues asparagine 295 and asparagine 331. 2 disulfides stabilise this stretch: cysteine 429-cysteine 459 and cysteine 441-cysteine 476.

This sequence belongs to the peptidase C13 family.

In terms of biological role, asparagine-specific endopeptidase involved in the processing of vacuolar seed protein precursors into the mature forms. The polypeptide is Vacuolar-processing enzyme (Vicia sativa (Spring vetch)).